The sequence spans 270 residues: Oxidized low-density lipoprotein receptor 1 (270 aa).

Basic and acidic residues predominate over residues 1–14; that stretch reads MTVDDPKGMKDQLD. Residues 1 to 22 are disordered; the sequence is MTVDDPKGMKDQLDQKPNGKTA. The Cytoplasmic segment spans residues 1 to 33; sequence MTVDDPKGMKDQLDQKPNGKTAKGFVSSWRWYP. Residues 34-56 traverse the membrane as a helical; Signal-anchor for type II membrane protein segment; that stretch reads AAVTLGVLCLGLLVTVILLILQL. The S-palmitoyl cysteine moiety is linked to residue cysteine 42. The tract at residues 57–146 is neck; sequence SQVSDLIKKQ…SGPCPQDWLW (90 aa). The Extracellular portion of the chain corresponds to 57–270; it reads SQVSDLIKKQ…QKKANLLRAQ (214 aa). Asparagine 69 and asparagine 135 each carry an N-linked (GlcNAc...) asparagine glycan. Residues 85 to 135 are a coiled coil; that stretch reads RRSEKSAQESQKELKEMIETLAHKLDEKSKKLMELHRQNLNLQEVLKEAAN. 3 disulfides stabilise this stretch: cysteine 140–cysteine 151, cysteine 168–cysteine 260, and cysteine 239–cysteine 252. Positions 147-261 constitute a C-type lectin domain; sequence HEENCYQFSS…CILTAFSICQ (115 aa).

As to quaternary structure, homodimer; disulfide-linked. May form a hexamer composed of 3 homodimers. Interacts with HSP70. In terms of processing, N-glycosylated. In terms of tissue distribution, highly expressed in endothelial cells, aortic intima and lung. Expressed at low level in other tissues.

It is found in the cell membrane. It localises to the membrane raft. The protein localises to the secreted. In terms of biological role, receptor that mediates the recognition, internalization and degradation of oxidatively modified low density lipoprotein (oxLDL) by vascular endothelial cells. OxLDL is a marker of atherosclerosis that induces vascular endothelial cell activation and dysfunction, resulting in pro-inflammatory responses, pro-oxidative conditions and apoptosis. Its association with oxLDL induces the activation of NF-kappa-B through an increased production of intracellular reactive oxygen and a variety of pro-atherogenic cellular responses including a reduction of nitric oxide (NO) release, monocyte adhesion and apoptosis. In addition to binding oxLDL, it acts as a receptor for the HSP70 protein involved in antigen cross-presentation to naive T-cells in dendritic cells, thereby participating in cell-mediated antigen cross-presentation. Also involved in inflammatory process, by acting as a leukocyte-adhesion molecule at the vascular interface in endotoxin-induced inflammation. Also acts as a receptor for advanced glycation end (AGE) products, activated platelets, monocytes, apoptotic cells and both Gram-negative and Gram-positive bacteria. The chain is Oxidized low-density lipoprotein receptor 1 (OLR1) from Bos taurus (Bovine).